Reading from the N-terminus, the 579-residue chain is UPF0329 protein ECU06_1620 (579 aa).

2 disordered regions span residues 325–360 and 370–389; these read EEKA…GEEA and ARRK…KIHK. The segment covering 329–338 has biased composition (basic residues); the sequence is KGRKDGKKKS. Positions 345-360 are enriched in acidic residues; that stretch reads KEEESETEEVEAGEEA.

This sequence belongs to the UPF0329 family.

The chain is UPF0329 protein ECU06_1620 from Encephalitozoon cuniculi (strain GB-M1) (Microsporidian parasite).